The following is a 258-amino-acid chain: Putative L-lactate dehydrogenase operon regulatory protein (258 aa).

Residues Arg6–Arg74 enclose the HTH gntR-type domain. A DNA-binding region (H-T-H motif) is located at residues Glu34–Ala53.

Its function is as follows. May be a regulatory protein for the LCT genes. This is Putative L-lactate dehydrogenase operon regulatory protein (lldR) from Escherichia coli (strain K12).